A 603-amino-acid chain; its full sequence is MLLSKKSASFALSAFAMLFTSVALAKEAPQAHKAVELSILHINDHHSYLEPHETRINLNGQQTKVDIGGFSAVNAKLNKLRKKYKNPLVLHAGDAITGTLYFTLFGGSADAAVMNAGNFHYFTLGNHEFDAGNEGLLKLLEPLKIPVLSANVIPDKNSILYNKWKPYDIFTVDGEKIAIIGLDTVNKTVNSSSPGKDVKFYDEIATAQIMANALKQQGINKIILLSHAGSEKNIEIAQKVNDIDVIVTGDSHYLYGNDELRSLKLPVIYEYPLEFKNPNGDPVFVMEGWAYSAVVGDLGVKFSPEGIASITRKIPHVLMSSHKLQVKNAEGKWTELTGDERKKALDTLKSMKSISLDDHDAKTDMLISKYKSEKDRLAQEIVGVITGSAMPGGSANRIPNKAGSNPEGSIATRFIAETMYNELKTVDLTIQNAGGVRADILPGNVTFNDAYTFLPFGNTLYTYKMEGSLVKQVLEDAMQFALVDGSTGAFPYGAGIRYEANETPNAEGKRLVSVEVLNKQTQQWEPIDDNKRYLVGTNAYVAGGKDGYKTFGKLFNDPKYEGVDTYLPDAESFIKFMKKHPHFEAYTSSNVKFNASTDALPKK.

An N-terminal signal peptide occupies residues 1 to 25; sequence MLLSKKSASFALSAFAMLFTSVALA. The Zn(2+) site is built by Asp44, His46, Asp94, Asn126, and His227. Substrate contacts are provided by residues Arg397, Arg437, Phe456, and 540–546; that span reads YVAGGKD.

This sequence belongs to the 5'-nucleotidase family. The cofactor is Zn(2+).

The protein localises to the periplasm. The catalysed reaction is a ribonucleoside 5'-phosphate + H2O = a ribonucleoside + phosphate. In terms of biological role, degrades NAD into adenosine and nicotinamide riboside, the latter being subsequently internalized by a specific permease. Also endowed with NAD(P) pyrophosphatase activity. Exhibits a broad substrate specificity, recognizing either mono- or dinucleotide nicotinamides and different adenosine phosphates with a maximal activity on 5'-adenosine monophosphate. This Haemophilus influenzae (strain ATCC 51907 / DSM 11121 / KW20 / Rd) protein is NAD 5'-nucleotidase.